Reading from the N-terminus, the 501-residue chain is Pyruvate kinase (501 aa).

A substrate-binding site is contributed by R50. N52, S54, D85, and T86 together coordinate K(+). 52 to 55 (NFSH) contributes to the ATP binding site. ATP is bound by residues R92 and K178. A Mg(2+)-binding site is contributed by E243. G266, D267, and T299 together coordinate substrate. Mg(2+) is bound at residue D267.

Belongs to the pyruvate kinase family. In terms of assembly, homotetramer. It depends on Mg(2+) as a cofactor. The cofactor is K(+).

The catalysed reaction is pyruvate + ATP = phosphoenolpyruvate + ADP + H(+). It participates in carbohydrate degradation; glycolysis; pyruvate from D-glyceraldehyde 3-phosphate: step 5/5. This is Pyruvate kinase (PYK1) from Kluyveromyces lactis (strain ATCC 8585 / CBS 2359 / DSM 70799 / NBRC 1267 / NRRL Y-1140 / WM37) (Yeast).